The sequence spans 337 residues: Adenylosuccinate synthetase (337 aa).

GTP-binding positions include 12–18 (GDEGKGK) and 42–44 (GHT). D13 functions as the Proton acceptor in the catalytic mechanism. 2 residues coordinate Mg(2+): D13 and G42. IMP-binding positions include 13-16 (DEGK), 40-43 (NAGH), T124, R138, Q176, T191, and R253. H43 acts as the Proton donor in catalysis. 249 to 255 (TVTGRRR) provides a ligand contact to substrate. GTP contacts are provided by residues R255, 281-283 (GVD), and 321-323 (STG).

The protein belongs to the adenylosuccinate synthetase family. As to quaternary structure, homodimer. Requires Mg(2+) as cofactor.

It is found in the cytoplasm. It carries out the reaction IMP + L-aspartate + GTP = N(6)-(1,2-dicarboxyethyl)-AMP + GDP + phosphate + 2 H(+). It participates in purine metabolism; AMP biosynthesis via de novo pathway; AMP from IMP: step 1/2. Plays an important role in the de novo pathway of purine nucleotide biosynthesis. Catalyzes the first committed step in the biosynthesis of AMP from IMP. The protein is Adenylosuccinate synthetase of Archaeoglobus fulgidus (strain ATCC 49558 / DSM 4304 / JCM 9628 / NBRC 100126 / VC-16).